The sequence spans 120 residues: Large ribosomal subunit protein uL18 (120 aa).

This sequence belongs to the universal ribosomal protein uL18 family. In terms of assembly, part of the 50S ribosomal subunit; part of the 5S rRNA/L5/L18/L25 subcomplex. Contacts the 5S and 23S rRNAs.

Functionally, this is one of the proteins that bind and probably mediate the attachment of the 5S RNA into the large ribosomal subunit, where it forms part of the central protuberance. This Bacillus licheniformis (strain ATCC 14580 / DSM 13 / JCM 2505 / CCUG 7422 / NBRC 12200 / NCIMB 9375 / NCTC 10341 / NRRL NRS-1264 / Gibson 46) protein is Large ribosomal subunit protein uL18.